Consider the following 352-residue polypeptide: Lipopolysaccharide core biosynthesis mannosyltransferase LpcC (352 aa).

It belongs to the glycosyltransferase group 1 family. Glycosyltransferase 4 subfamily.

Its pathway is bacterial outer membrane biogenesis; LPS core biosynthesis. Functionally, acts at transfer of mannose group to a 3-deoxy-D-mono octulonic acid (KDO) via an alpha-1,5 linkage. The sequence is that of Lipopolysaccharide core biosynthesis mannosyltransferase LpcC (lpcC) from Rhizobium leguminosarum bv. viciae.